The sequence spans 436 residues: 3-ketoacyl-CoA thiolase (436 aa).

Residue cysteine 99 is the Acyl-thioester intermediate of the active site. Residues histidine 392 and cysteine 422 each act as proton acceptor in the active site.

Belongs to the thiolase-like superfamily. Thiolase family. In terms of assembly, heterotetramer of two alpha chains (FadJ) and two beta chains (FadI).

The protein localises to the cytoplasm. The catalysed reaction is an acyl-CoA + acetyl-CoA = a 3-oxoacyl-CoA + CoA. The protein operates within lipid metabolism; fatty acid beta-oxidation. Its function is as follows. Catalyzes the final step of fatty acid oxidation in which acetyl-CoA is released and the CoA ester of a fatty acid two carbons shorter is formed. The sequence is that of 3-ketoacyl-CoA thiolase from Shewanella sediminis (strain HAW-EB3).